A 143-amino-acid polypeptide reads, in one-letter code: Calcitonin (143 aa).

The N-terminal stretch at 1–25 (MGFGKSSPFLAFSILVLCQAGSLQA) is a signal peptide. Residues 26–84 (TPLRSALETLPDPGALSEKEGRLLLAALVKAYVQRKTNELEQEEEQEETEDSSLDSSRA) constitute a propeptide that is removed on maturation. Serine 42 is subject to Phosphoserine. The segment at 62–86 (TNELEQEEEQEETEDSSLDSSRAKR) is disordered. The segment covering 65-78 (LEQEEEQEETEDSS) has biased composition (acidic residues). A disulfide bridge links cysteine 87 with cysteine 93. Residues 112–143 (GFGPETPGKKRDIANSLEKDLSSHFGVPTDAN) form a disordered region. The residue at position 118 (proline 118) is a Proline amide. Basic and acidic residues predominate over residues 118–133 (PGKKRDIANSLEKDLS). Positions 122–143 (RDIANSLEKDLSSHFGVPTDAN) are excised as a propeptide.

It belongs to the calcitonin family.

Its subcellular location is the secreted. In terms of biological role, calcitonin is a peptide hormone that causes a rapid but short-lived drop in the level of calcium and phosphate in blood by promoting the incorporation of those ions in the bones. Calcitonin function is mediated by the calcitonin receptor/CALCR and the CALCR-RAMP2 (AMYR2) receptor complex. This is Calcitonin (CALCA) from Ovis aries (Sheep).